The sequence spans 415 residues: uncharacterized protein (415 aa).

The region spanning 1–52 (MQDLTINAIGAQGDGLARTADGKPAFVPLTLPGEVVRAKMDGARGEVVEILA) is the TRAM domain. [4Fe-4S] cluster contacts are provided by cysteine 62, cysteine 68, cysteine 71, and cysteine 147. 4 residues coordinate S-adenosyl-L-methionine: glutamine 252, tyrosine 279, glutamate 299, and aspartate 347. The active-site Nucleophile is the cysteine 373.

The protein belongs to the class I-like SAM-binding methyltransferase superfamily. RNA M5U methyltransferase family.

This is an uncharacterized protein from Caulobacter vibrioides (strain ATCC 19089 / CIP 103742 / CB 15) (Caulobacter crescentus).